The primary structure comprises 734 residues: Myb-like protein J (734 aa).

Disordered regions lie at residues 1-35, 128-196, and 221-378; these read MPNN…FKSN, QKDQ…PTMM, and SPIS…LKQG. Over residues 131-142 the composition is skewed to basic and acidic residues; that stretch reads QQQKEQQKEQQK. Positions 164–173 are enriched in low complexity; sequence TTTTTTTTTT. Residues 174-196 show a composition bias toward polar residues; that stretch reads AVEQQGAEQQDTNLNSTSSPTMM. A compositionally biased stretch (low complexity) spans 221–230; the sequence is SPISSSLNNS. The span at 231 to 257 shows a compositional bias: polar residues; sequence QDNTKPVSPDNIENTSNPMDTSSSNGK. A compositionally biased stretch (low complexity) spans 258–372; it reads TPTITPIVTP…GGKTNPTGKK (115 aa). Residues 371–426 enclose the HTH myb-type domain; that stretch reads KKTSLKQGWTKEEHIRFLNGIQIHGKGAWKEIAQFVGTRTPTQIQSHAQKYYLRQK. The segment at residues 399-422 is a DNA-binding region (H-T-H motif); it reads WKEIAQFVGTRTPTQIQSHAQKYY. Low complexity predominate over residues 445–454; sequence DDNLNNSNKN. The interval 445 to 623 is disordered; it reads DDNLNNSNKN…GNILRHQNSH (179 aa). The span at 455-468 shows a compositional bias: basic and acidic residues; that stretch reads NVDKNKQDDKEKKT. Positions 469–478 are enriched in basic residues; the sequence is QKTKKTKSKS. Low complexity-rich tracts occupy residues 489–543 and 574–615; these read QQQQ…SSQT and NNNN…NEGN.

The protein resides in the nucleus. The sequence is that of Myb-like protein J (mybJ) from Dictyostelium discoideum (Social amoeba).